The following is a 330-amino-acid chain: Glycerol-3-phosphate dehydrogenase [NAD(P)+] (330 aa).

NADPH contacts are provided by Trp-13, Arg-33, and Lys-103. Sn-glycerol 3-phosphate contacts are provided by Lys-103, Gly-131, and Thr-133. An NADPH-binding site is contributed by Ala-135. 5 residues coordinate sn-glycerol 3-phosphate: Lys-186, Asp-239, Ser-249, Arg-250, and Asn-251. Lys-186 acts as the Proton acceptor in catalysis. Arg-250 serves as a coordination point for NADPH. Residues Val-274 and Glu-276 each coordinate NADPH.

It belongs to the NAD-dependent glycerol-3-phosphate dehydrogenase family.

It localises to the cytoplasm. It carries out the reaction sn-glycerol 3-phosphate + NAD(+) = dihydroxyacetone phosphate + NADH + H(+). The catalysed reaction is sn-glycerol 3-phosphate + NADP(+) = dihydroxyacetone phosphate + NADPH + H(+). It participates in membrane lipid metabolism; glycerophospholipid metabolism. Functionally, catalyzes the reduction of the glycolytic intermediate dihydroxyacetone phosphate (DHAP) to sn-glycerol 3-phosphate (G3P), the key precursor for phospholipid synthesis. The chain is Glycerol-3-phosphate dehydrogenase [NAD(P)+] from Erythrobacter litoralis (strain HTCC2594).